The chain runs to 152 residues: Protein SprT-like (152 aa).

Residues 9–149 (LQKLTETISL…CGKCNGKLKE (141 aa)) form the SprT-like domain. His70 contributes to the Zn(2+) binding site. Glu71 is a catalytic residue. His74 is a binding site for Zn(2+).

This sequence belongs to the SprT family. The cofactor is Zn(2+).

The protein resides in the cytoplasm. The sequence is that of Protein SprT-like from Staphylococcus saprophyticus subsp. saprophyticus (strain ATCC 15305 / DSM 20229 / NCIMB 8711 / NCTC 7292 / S-41).